The sequence spans 354 residues: Guanine nucleotide-binding protein G(o) subunit alpha (354 aa).

Glycine 2 carries N-myristoyl glycine lipidation. Cysteine 3 is lipidated: S-palmitoyl cysteine. The 323-residue stretch at lysine 32–tyrosine 354 folds into the G-alpha domain. Positions lysine 35–threonine 48 are G1 motif. Residues glycine 40 to serine 47, leucine 176 to threonine 182, aspartate 201 to glutamine 205, asparagine 270 to aspartate 273, and alanine 326 contribute to the GTP site. Residues serine 47 and threonine 182 each contribute to the Mg(2+) site. A G2 motif region spans residues aspartate 174–threonine 182. The interval phenylalanine 197 to arginine 206 is G3 motif. Positions isoleucine 266–aspartate 273 are G4 motif. The tract at residues threonine 324–threonine 329 is G5 motif.

It belongs to the G-alpha family. G(i/o/t/z) subfamily. G proteins are composed of 3 units; alpha, beta and gamma. The alpha chain contains the guanine nucleotide binding site. Interacts (in GDP-bound form) with gpr-1; gpr-1 forms a complex with gpr-2 and lin-5. Interacts (in GDP-bound form) with gpb-1. Interacts (in GDP-bound form) with gbas-1 (via GBA motif); the interaction leads to activation of goa-1. In terms of tissue distribution, expressed in the ASER neuron and the intestine.

In terms of biological role, guanine nucleotide-binding proteins (G proteins) are involved as modulators or transducers in various transmembrane signaling systems. In the 1-cell embryo, probably together with gpa-16, controls nuclear rotation and spindle elongation during mitosis. During the first embryonic cell divisions, plays a role in gpr-1/2 cortical localization and in the proper orientation of EMS blastomere mitotic spindle. Polarity determinants (par genes) may regulate lin-5/gpr-1/gpr-2/goa-1 locally to create the asymmetric forces that drive spindle movement. Involved in chemosensory responses to attractive and repellent odors detected by AWC and AWB sensory neurons, respectively. In ASER neurons, acts downstream of glr-3 to regulate cold avoidance behavior via calcium signaling, and it may also play a role in sensing cold in the intestine. Negatively regulates axon regeneration after injury downstream of the inhibitory compound arachidonoyl ethanolamide (AEA) by antagonizing the activation of the JNK pathway (mlk-1/mek-1/kgb-1). In neurons, may negatively regulate diacylglycerol (DAG) production mediated by egl-30 signaling cascade and thereby negatively regulates acetylcholine release. Couples to the muscarinic acetylcholine receptor gar-2 to negatively regulate cholinergic receptor activity in the presence of high levels of acetylcholine in ventral cord motor neurons. Plays a role in the navigational capacity of sperm and the targeting of sperm derived from males to the fertilization site in the uterus of hermaphrodites. Involved in egg-laying and in regulating dopamine-mediated locomotion. Most likely couples to the dopamine receptors dop-2 and dop-3 to positively regulate the dopamine-mediated suppression of crh-1/CREB1 transcription factor activation in cholinergic SIA neurons in the presence of food. The chain is Guanine nucleotide-binding protein G(o) subunit alpha from Caenorhabditis elegans.